We begin with the raw amino-acid sequence, 400 residues long: WD repeat and FYVE domain-containing protein 2 (400 aa).

WD repeat units follow at residues 22–61 (GSQE…QYWP), 66–105 (AMPS…NKMT), 112–150 (AHQS…QRLG), 153–192 (RTSA…CTLV), 197–236 (GHTG…GTAI), and 240–279 (GHND…QETP). An FYVE-type zinc finger spans residues 281–352 (WLDSDSCQKC…VCDSCHEAIT (72 aa)). Cysteine 287, cysteine 290, cysteine 314, cysteine 317, cysteine 322, cysteine 325, cysteine 344, and cysteine 347 together coordinate Zn(2+). One copy of the WD 7 repeat lies at 364 to 399 (DSKHNIVHVHFDATRGWLLTSGTDKVIKLWDMTPVV).

As to quaternary structure, homodimer. Interacts (via WD repeats 1-3) with AKT1, AKT2, PRKCZ and PRKCI. Interacts with VAMP2. Forms a complex with VAMP2 and PRKCZ. Interacts with FOXO1. Forms a complex with AKT1 and FOXO1.

The protein resides in the endosome. Its subcellular location is the early endosome. It is found in the cytoplasm. Its function is as follows. Acts in an adapter protein-like fashion to mediate the interaction between the kinase PRKCZ and its substrate VAMP2 and increases the PRKCZ-dependent phosphorylation of VAMP2. Positively regulates adipocyte differentiation, by facilitating the phosphorylation and thus inactivation of the anti-adipogenetic transcription factor FOXO1 by the kinase AKT1. Plays a role in endosomal control of AKT2 signaling; required for insulin-stimulated AKT2 phosphorylation and glucose uptake and insulin-stimulated phosphorylation of AKT2 substrates. Participates in transferrin receptor endocytosis. The chain is WD repeat and FYVE domain-containing protein 2 (WDFY2) from Homo sapiens (Human).